The chain runs to 277 residues: MNGFASLLRRNQFILLVLFLLQIQSLGLDIDSRPTAEVCATHTISPGPKGDDGEKGDPGEEGKHGKVGRMGPKGIKGELGDMGDQGNIGKTGPIGKKGDKGEKGLLGIPGEKGKAGTVCDCGRYRKFVGQLDISIARLKTSMKFVKNVIAGIRETEEKFYYIVQEEKNYRESLTHCRIRGGMLAMPKDEAANTLIADYVAKSGFFRVFIGVNDLEREGQYMFTDNTPLQNYSNWNEGEPSDPYGHEDCVEMLSSGRWNDTECHLTMYFVCEFIKKKK.

Residues 1 to 27 (MNGFASLLRRNQFILLVLFLLQIQSLG) form the signal peptide. Residues 40-107 (ATHTISPGPK…GDKGEKGLLG (68 aa)) form a disordered region. Basic and acidic residues predominate over residues 49–64 (KGDDGEKGDPGEEGKH). One can recognise a Collagen-like domain in the interval 53 to 112 (GEKGDPGEEGKHGKVGRMGPKGIKGELGDMGDQGNIGKTGPIGKKGDKGEKGLLGIPGEK). One can recognise a C-type lectin domain in the interval 155-271 (TEEKFYYIVQ…CHLTMYFVCE (117 aa)). Cystine bridges form between Cys176-Cys270 and Cys248-Cys262. The N-linked (GlcNAc...) asparagine glycan is linked to Asn258.

This sequence belongs to the COLEC10/COLEC11 family. Highly expressed in liver, placenta and adrenal gland. Moderately expressed in small intestine, lung, stomach and prostate. Weakly expressed in trachea and spleen.

Its subcellular location is the secreted. The protein resides in the golgi apparatus. It localises to the cytoplasm. Its function is as follows. Lectin that binds to various sugars: galactose &gt; mannose = fucose &gt; N-acetylglucosamine &gt; N-acetylgalactosamine. Acts as a chemoattractant, probably involved in the regulation of cell migration. The protein is Collectin-10 (COLEC10) of Homo sapiens (Human).